The chain runs to 340 residues: UDP-3-O-(3-hydroxymyristoyl)glucosamine N-acyltransferase (340 aa).

H239 (proton acceptor) is an active-site residue.

The protein belongs to the transferase hexapeptide repeat family. LpxD subfamily. In terms of assembly, homotrimer.

The catalysed reaction is a UDP-3-O-[(3R)-3-hydroxyacyl]-alpha-D-glucosamine + a (3R)-hydroxyacyl-[ACP] = a UDP-2-N,3-O-bis[(3R)-3-hydroxyacyl]-alpha-D-glucosamine + holo-[ACP] + H(+). It catalyses the reaction UDP-3-O-[(3R)-3-hydroxytetradecanoyl]-alpha-D-glucosamine + (3R)-hydroxytetradecanoyl-[ACP] = UDP-2-N,3-O-bis[(3R)-3-hydroxytetradecanoyl]-alpha-D-glucosamine + holo-[ACP] + H(+). Its pathway is glycolipid biosynthesis; lipid IV(A) biosynthesis; lipid IV(A) from (3R)-3-hydroxytetradecanoyl-[acyl-carrier-protein] and UDP-N-acetyl-alpha-D-glucosamine: step 3/6. Catalyzes the N-acylation of UDP-3-O-(hydroxytetradecanoyl)glucosamine using 3-hydroxytetradecanoyl-ACP as the acyl donor. Is involved in the biosynthesis of lipid A, a phosphorylated glycolipid that anchors the lipopolysaccharide to the outer membrane of the cell. This is UDP-3-O-(3-hydroxymyristoyl)glucosamine N-acyltransferase from Yersinia pestis bv. Antiqua (strain Antiqua).